Consider the following 490-residue polypeptide: Protein lag-3 (490 aa).

Disordered stretches follow at residues P18–P55, E105–E155, S213–E235, S307–I362, and Q391–N490. The segment covering E105–E119 has biased composition (basic and acidic residues). Over residues N122–V138 the composition is skewed to polar residues. A compositionally biased stretch (polar residues) spans S307 to M318. 3 stretches are compositionally biased toward low complexity: residues Q341–M359, Q391–M404, and Q413–M456.

In terms of assembly, component of a complex consisting of at least a lin-12/Notch intracellular domain (NICD), lag-1, and lag-3. Interacts with a NICD of lin-12/Notch or glp-1/Notch; the interactions are direct. Expressed in the progenitor zone and the early pachytene region of the hermaphrodite gonad.

The protein localises to the nucleus. Glp-1/Notch and lin-12/Notch proteins promote signaling by recruiting lag-3 to target promoters, where it functions as a transcriptional activator, probably as part of a complex with a Notch intracellular domain (NICD) and the transcription regulator lag-1. Involved in the p53-mediated germ-cell apoptotic response to DNA damage, perhaps acting as a transcriptional activator. May regulate phosphatase lip-1 mRNA transcription downstream of glp-1. This is Protein lag-3 (sel-8) from Caenorhabditis elegans.